Here is a 142-residue protein sequence, read N- to C-terminus: Large ribosomal subunit protein uL11 (142 aa).

The protein belongs to the universal ribosomal protein uL11 family. In terms of assembly, part of the ribosomal stalk of the 50S ribosomal subunit. Interacts with L10 and the large rRNA to form the base of the stalk. L10 forms an elongated spine to which L12 dimers bind in a sequential fashion forming a multimeric L10(L12)X complex. One or more lysine residues are methylated.

Functionally, forms part of the ribosomal stalk which helps the ribosome interact with GTP-bound translation factors. This Cronobacter sakazakii (strain ATCC BAA-894) (Enterobacter sakazakii) protein is Large ribosomal subunit protein uL11.